The primary structure comprises 485 residues: Vacuolar fusion protein CCZ1 homolog (485 aa).

This sequence belongs to the CCZ1 family. Component of the Mon1-Ccz1 guanyl-nucleotide exchange factor complex made up of Mon1, Ccz1 and Bulli; the interaction of Bulli with the Mon1-Ccz1 heterodimer is mediated via the C-terminal Mic1 domain of Bulli. Mon1 and Ccz1 form a stable complex which displays Rab7 GEF activity with or without Bulli; GEF activity is enhanced by Bulli possibly by improving membrane association of the complex. Interacts with Rab5 and Rab7; preferentially binds GTP-bound Rab5 and GDP-bound Rab7.

It is found in the cytoplasm. Its subcellular location is the cytosol. The Rab7 guanyl-nucleotide exchange factor (GEF) activity of the Mon1-Ccz1 complex is autoinhibited by the N-terminal disordered region of Mon1. GEF activity is stimulated by Rab5-mediated recruitment to membranes. Part of the Mon1-Ccz1 guanyl-nucleotide exchange factor complex specific for Rab7 that promotes the exchange of GDP to GTP, converting Rab7 from an inactive GDP-bound form into an active GTP-bound form. Required for recruitment of Rab7 to endosomal and autophagosomal membranes to mediate endolysosomal and autolysosomal vesicle maturation. Required for fusion of multivesicular bodies and lysosomes but not their formation or trafficking. Involved in the replacement of Rab5 (and possibly Rab4) with Rab7, also known as Rab conversion or the Rab cascade, during endosomal maturation. The Mon1-Ccz1 complex is recruited to phosphatidylinositol 3-phosphate (PtdIns[3]P) enriched membranes by Rab5, which stimulates recruitment and guanyl-nucleotide exchange of Rab7. Together with Rab7 required for autolysosome formation in fat cells and autophagic degradation during starvation-induced basal and developmental autophagy. This is Vacuolar fusion protein CCZ1 homolog from Drosophila melanogaster (Fruit fly).